The primary structure comprises 207 residues: LexA repressor (207 aa).

Residues 28-48 (VREIGEAVGLASSSTVHGHLA) constitute a DNA-binding region (H-T-H motif). Catalysis depends on for autocatalytic cleavage activity residues Ser129 and Lys167.

The protein belongs to the peptidase S24 family. As to quaternary structure, homodimer.

The catalysed reaction is Hydrolysis of Ala-|-Gly bond in repressor LexA.. In terms of biological role, represses a number of genes involved in the response to DNA damage (SOS response), including recA and lexA. In the presence of single-stranded DNA, RecA interacts with LexA causing an autocatalytic cleavage which disrupts the DNA-binding part of LexA, leading to derepression of the SOS regulon and eventually DNA repair. The protein is LexA repressor of Bacillus licheniformis (strain ATCC 14580 / DSM 13 / JCM 2505 / CCUG 7422 / NBRC 12200 / NCIMB 9375 / NCTC 10341 / NRRL NRS-1264 / Gibson 46).